The following is a 481-amino-acid chain: Phototropic-responsive NPH3 family protein NPY4 (481 aa).

One can recognise a BTB domain in the interval 29-102; it reads TEIIIIIGNV…CYGITVTLNA (74 aa). The region spanning 207-450 is the NPH3 domain; that stretch reads DWWVEDLCEL…VQVLFFEQIR (244 aa). Tyrosine 391 is modified (phosphotyrosine). A disordered region spans residues 456-481; it reads TGYSTPELTTTTLNTEDDEWDHEKEF. The segment covering 460–469 has biased composition (low complexity); sequence TPELTTTTLN.

It belongs to the NPH3 family. Expressed in the hypocotyl cells that would differentiate into vascular bundles. Highly expressed in primary root tips and radicles.

Its subcellular location is the cell membrane. It localises to the cytoplasm. The protein localises to the cytosol. It participates in protein modification; protein ubiquitination. Functionally, may act as a substrate-specific adapter of an E3 ubiquitin-protein ligase complex (CUL3-RBX1-BTB) which mediates the ubiquitination and subsequent proteasomal degradation of target proteins. Plays an essential role in auxin-mediated organogenesis and in root gravitropic responses through the control of PIN proteins (e.g. PIN1 and PIN2) polarity in the root tip endodermal cell layer and in shoot epidermis. Recruited to the plasma membrane by PINs (e.g. PIN1 and PIN2) and, in concert with AGC kinases-mediated (e.g. D6PK and PID) PINs phosphorylation, maintains their polarity through limiting lateral diffusion-based escape. This Arabidopsis thaliana (Mouse-ear cress) protein is Phototropic-responsive NPH3 family protein NPY4.